The chain runs to 154 residues: Jupiter microtubule associated homolog 1 (154 aa).

Residue Met-1 is modified to N-acetylmethionine. The segment covering 1–19 has biased composition (polar residues); sequence MTTTTTFKGVDPNSRNSSR. Residues 1 to 154 form a disordered region; that stretch reads MTTTTTFKGV…PGGKSSLVLG (154 aa). Thr-2 bears the N-acetylthreonine; in Hematological and neurological expressed 1 protein, N-terminally processed mark. Residues Ser-28 and Ser-31 each carry the phosphoserine modification. Residue Thr-54 is modified to Phosphothreonine. A phosphoserine mark is found at Ser-71, Ser-87, Ser-88, and Ser-92. The span at 79–91 shows a compositional bias: polar residues; the sequence is SPGTQRSNSSEAS. The span at 96–108 shows a compositional bias: basic and acidic residues; the sequence is LDLKGEGDMHENV. Residues 125–138 are compositionally biased toward pro residues; the sequence is PAAPVPSPVAPAPV. Position 131 is a phosphoserine (Ser-131). Lys-148 carries the N6-acetyllysine modification.

This sequence belongs to the JUPITER family. Interacts with the complex composed, at least, of APC, CTNNB1 and GSK3B; the interaction takes place with the inactive form of GSK3B (phosphorylated at 'Ser-9'). In terms of tissue distribution, expressed in yolk sac, fetal brain, brain, spleen and bone marrow.

It is found in the nucleus. The protein localises to the cytoplasm. In terms of biological role, modulates negatively AKT-mediated GSK3B signaling. Induces CTNNB1 'Ser-33' phosphorylation and degradation through the suppression of the inhibitory 'Ser-9' phosphorylation of GSK3B, which represses the function of the APC:CTNNB1:GSK3B complex and the interaction with CDH1/E-cadherin in adherent junctions. Plays a role in the regulation of cell cycle and cell adhesion. Has an inhibitory role on AR-signaling pathway through the induction of receptor proteasomal degradation. The polypeptide is Jupiter microtubule associated homolog 1 (Mus musculus (Mouse)).